The primary structure comprises 172 residues: Large ribosomal subunit protein uL10 (172 aa).

The protein belongs to the universal ribosomal protein uL10 family. In terms of assembly, part of the ribosomal stalk of the 50S ribosomal subunit. The N-terminus interacts with L11 and the large rRNA to form the base of the stalk. The C-terminus forms an elongated spine to which L12 dimers bind in a sequential fashion forming a multimeric L10(L12)X complex.

Functionally, forms part of the ribosomal stalk, playing a central role in the interaction of the ribosome with GTP-bound translation factors. The polypeptide is Large ribosomal subunit protein uL10 (Rhizobium johnstonii (strain DSM 114642 / LMG 32736 / 3841) (Rhizobium leguminosarum bv. viciae)).